We begin with the raw amino-acid sequence, 671 residues long: Anaphase-promoting complex subunit cut9 (671 aa).

A disordered region spans residues 1 to 24 (MVVKRTQTDSRMQSTPGNHNHPDA). TPR repeat units lie at residues 83–114 (REDY…LDIT), 117–142 (PNDA…LLTK), 150–173 (SACR…LNLL), 198–229 (LEAS…ALMV), 234–257 (YEAF…LVLK), 268–296 (AAFL…DYLS), 306–334 (DLLL…ILEI), 341–368 (VYPL…LVDR), 373–402 (AVTW…SSTM), 407–435 (GPAW…TAAR), 442–470 (LPYL…SYAL), 475–507 (PLLL…LVKK), 513–545 (KPWA…GLLL), and 550–579 (ANVH…SLAI). Positions 622-643 (NLNTSDKSMSMEDQSGKVTESV) are disordered.

As to quaternary structure, the APC/C is composed of at least 13 subunits: apc1, apc2, nuc2, apc4, apc5, cut9, apc8, apc10, apc11, hcn1, apc13, apc14 and apc15. Homodimer. Interacts directly with nuc2 and hcn1. In terms of processing, phosphorylated.

The protein localises to the nucleus. Component of the anaphase-promoting complex/cyclosome (APC/C), a cell cycle-regulated E3 ubiquitin-protein ligase complex that controls progression through mitosis and the G1 phase of the cell cycle. The APC/C is thought to confer substrate specificity and, in the presence of ubiquitin-conjugating E2 enzymes, it catalyzes the formation of protein-ubiquitin conjugates that are subsequently degraded by the 26S proteasome. May play a pivotal role in the control of anaphase. In Schizosaccharomyces pombe (strain 972 / ATCC 24843) (Fission yeast), this protein is Anaphase-promoting complex subunit cut9 (cut9).